A 158-amino-acid chain; its full sequence is N-alpha-acetyltransferase RimI (158 aa).

The 148-residue stretch at 8 to 155 (VTIGALTRAD…DAYTMRRDSG (148 aa)) folds into the N-acetyltransferase domain.

The protein belongs to the acetyltransferase family. RimI subfamily. Monomer. Interacts with TsaD. Interacts with GroS/GroES.

It carries out the reaction N-terminal L-methionyl-L-alanyl-[protein] + acetyl-CoA = N-terminal N(alpha)-acetyl-L-methionyl-L-alanyl-[protein] + CoA + H(+). The catalysed reaction is N-terminal L-methionyl-L-seryl-[protein] + acetyl-CoA = N-terminal N(alpha)-acetyl-L-methionyl-L-seryl-[protein] + CoA + H(+). It catalyses the reaction N-terminal L-methionyl-L-valyl-[protein] + acetyl-CoA = N-terminal N(alpha)-acetyl-L-methionyl-L-valyl-[protein] + CoA + H(+). The enzyme catalyses N-terminal L-methionyl-L-threonyl-[protein] + acetyl-CoA = N-terminal N(alpha)-acetyl-L-methionyl-L-threonyl-[protein] + CoA + H(+). It carries out the reaction N-terminal L-methionyl-L-lysyl-[protein] + acetyl-CoA = N-terminal N(alpha)-acetyl-L-methionyl-L-lysyl-[protein] + CoA + H(+). The catalysed reaction is N-terminal L-methionyl-L-leucyl-[protein] + acetyl-CoA = N-terminal N(alpha)-acetyl-L-methionyl-L-leucyl-[protein] + CoA + H(+). It catalyses the reaction N-terminal L-methionyl-L-phenylalanyl-[protein] + acetyl-CoA = N-terminal N(alpha)-acetyl-L-methionyl-L-phenylalanyl-[protein] + CoA + H(+). The enzyme catalyses N-terminal L-methionyl-L-tyrosyl-[protein] + acetyl-CoA = N-terminal N(alpha)-acetyl-L-methionyl-L-tyrosyl-[protein] + CoA + H(+). It carries out the reaction N-terminal glycyl-[protein] + acetyl-CoA = N-terminal N(alpha)-acetylglycyl-[protein] + CoA + H(+). The catalysed reaction is N-terminal L-alanyl-[protein] + acetyl-CoA = N-terminal N(alpha)-acetyl-L-alanyl-[protein] + CoA + H(+). It catalyses the reaction N-terminal L-seryl-[protein] + acetyl-CoA = N-terminal N(alpha)-acetyl-L-seryl-[protein] + CoA + H(+). The enzyme catalyses N-terminal L-valyl-[protein] + acetyl-CoA = N-terminal N(alpha)-acetyl-L-valyl-[protein] + CoA + H(+). It carries out the reaction N-terminal L-cysteinyl-[protein] + acetyl-CoA = N-terminal N(alpha)-acetyl-L-cysteinyl-[protein] + CoA + H(+). The catalysed reaction is N-terminal L-threonyl-[protein] + acetyl-CoA = N-terminal N(alpha)-acetyl-L-threonyl-[protein] + CoA + H(+). Its function is as follows. N-alpha-acetyltransferase that specifically mediates the acetylation of N-terminal residues. Able to mediate acetylation of a wide variety of N-terminal residues, with preference for hydrophobic N-termini. Acetylates GroS/GroES and GroEL1. Able to acetylate the ribosomal protein bS18, but it is unclear whether it acetylates its N-terminal alanine residue. This is N-alpha-acetyltransferase RimI from Mycobacterium tuberculosis (strain ATCC 25618 / H37Rv).